The following is a 1872-amino-acid chain: Ral GTPase-activating protein subunit alpha-2 (1872 aa).

Phosphoserine occurs at positions 373, 376, and 379. A compositionally biased stretch (basic and acidic residues) spans 446 to 469 (DKKDVAEEDADKLGLSETDSKEVS). Positions 446 to 481 (DKKDVAEEDADKLGLSETDSKEVSSESSGHKRSSSW) are disordered. A phosphoserine mark is found at serine 486 and serine 696. 2 disordered regions span residues 711–730 (FRSA…NTVR) and 758–849 (QPVP…TGSD). Threonine 715 carries the phosphothreonine; by PKB modification. The span at 775-795 (SDSSQGQKVENSQNLSSSEPK) shows a compositional bias: polar residues. Over residues 796–810 (SVQESKGHVTHEHEG) the composition is skewed to basic and acidic residues. A phosphoserine mark is found at serine 819 and serine 820. Residues 824-843 (LDLKEESQQTHGRCRERQKS) are compositionally biased toward basic and acidic residues. Serine 1592 is modified (phosphoserine). Residues 1634–1842 (LKNLDSRQCR…EERALYLEAI (209 aa)) enclose the Rap-GAP domain.

As to quaternary structure, component of the heterodimeric RalGAP2 complex with RALGAPB. Heterodimerization is required for activity. In terms of tissue distribution, highly expressed in lung, liver, testis and thymus with lower levels in brain and heart (at protein level).

It localises to the cytoplasm. Its function is as follows. Catalytic subunit of the heterodimeric RalGAP2 complex which acts as a GTPase activator for the Ras-like small GTPases RALA and RALB. This is Ral GTPase-activating protein subunit alpha-2 from Rattus norvegicus (Rat).